A 342-amino-acid polypeptide reads, in one-letter code: Holliday junction branch migration complex subunit RuvB (342 aa).

Residues 1–184 are large ATPase domain (RuvB-L); that stretch reads MEENFDIREQ…FGINLHLEYY (184 aa). Residues Leu23, Arg24, Gly65, Lys68, Thr69, Thr70, 131 to 133, Arg174, Tyr184, and Arg221 contribute to the ATP site; that span reads EDY. Residue Thr69 coordinates Mg(2+). Positions 185–255 are small ATPAse domain (RuvB-S); the sequence is DDDVLTSIIR…IARFALEALN (71 aa). The tract at residues 258 to 342 is head domain (RuvB-H); the sequence is RYGLDEIDNK…YNSQKTLFDD (85 aa). DNA contacts are provided by Arg313 and Arg318.

This sequence belongs to the RuvB family. As to quaternary structure, homohexamer. Forms an RuvA(8)-RuvB(12)-Holliday junction (HJ) complex. HJ DNA is sandwiched between 2 RuvA tetramers; dsDNA enters through RuvA and exits via RuvB. An RuvB hexamer assembles on each DNA strand where it exits the tetramer. Each RuvB hexamer is contacted by two RuvA subunits (via domain III) on 2 adjacent RuvB subunits; this complex drives branch migration. In the full resolvosome a probable DNA-RuvA(4)-RuvB(12)-RuvC(2) complex forms which resolves the HJ.

The protein localises to the cytoplasm. It catalyses the reaction ATP + H2O = ADP + phosphate + H(+). In terms of biological role, the RuvA-RuvB-RuvC complex processes Holliday junction (HJ) DNA during genetic recombination and DNA repair, while the RuvA-RuvB complex plays an important role in the rescue of blocked DNA replication forks via replication fork reversal (RFR). RuvA specifically binds to HJ cruciform DNA, conferring on it an open structure. The RuvB hexamer acts as an ATP-dependent pump, pulling dsDNA into and through the RuvAB complex. RuvB forms 2 homohexamers on either side of HJ DNA bound by 1 or 2 RuvA tetramers; 4 subunits per hexamer contact DNA at a time. Coordinated motions by a converter formed by DNA-disengaged RuvB subunits stimulates ATP hydrolysis and nucleotide exchange. Immobilization of the converter enables RuvB to convert the ATP-contained energy into a lever motion, pulling 2 nucleotides of DNA out of the RuvA tetramer per ATP hydrolyzed, thus driving DNA branch migration. The RuvB motors rotate together with the DNA substrate, which together with the progressing nucleotide cycle form the mechanistic basis for DNA recombination by continuous HJ branch migration. Branch migration allows RuvC to scan DNA until it finds its consensus sequence, where it cleaves and resolves cruciform DNA. This is Holliday junction branch migration complex subunit RuvB from Phocaeicola vulgatus (strain ATCC 8482 / DSM 1447 / JCM 5826 / CCUG 4940 / NBRC 14291 / NCTC 11154) (Bacteroides vulgatus).